The following is a 215-amino-acid chain: Small ribosomal subunit protein uS5 (215 aa).

Over residues 1 to 11 (MTDSSPQSNPN) the composition is skewed to polar residues. The interval 1-61 (MTDSSPQSNP…GQDRDSEWQE (61 aa)) is disordered. The span at 12–28 (AVPGAADVPAAAQGQQQ) shows a compositional bias: low complexity. Residues 39–61 (RGDRRGDRRGGRRGQDRDSEWQE) show a composition bias toward basic and acidic residues. One can recognise an S5 DRBM domain in the interval 59–122 (WQERVVQIRR…ADGKKHLVKV (64 aa)).

It belongs to the universal ribosomal protein uS5 family. Part of the 30S ribosomal subunit. Contacts proteins S4 and S8.

With S4 and S12 plays an important role in translational accuracy. Its function is as follows. Located at the back of the 30S subunit body where it stabilizes the conformation of the head with respect to the body. This Synechococcus sp. (strain CC9902) protein is Small ribosomal subunit protein uS5.